A 351-amino-acid polypeptide reads, in one-letter code: Uroporphyrinogen decarboxylase (351 aa).

Substrate is bound by residues 25 to 29, aspartate 74, tyrosine 151, serine 206, and histidine 325; that span reads RQAGR.

Belongs to the uroporphyrinogen decarboxylase family. Homodimer.

Its subcellular location is the cytoplasm. The catalysed reaction is uroporphyrinogen III + 4 H(+) = coproporphyrinogen III + 4 CO2. It functions in the pathway porphyrin-containing compound metabolism; protoporphyrin-IX biosynthesis; coproporphyrinogen-III from 5-aminolevulinate: step 4/4. In terms of biological role, catalyzes the decarboxylation of four acetate groups of uroporphyrinogen-III to yield coproporphyrinogen-III. The chain is Uroporphyrinogen decarboxylase from Chlorobium phaeobacteroides (strain DSM 266 / SMG 266 / 2430).